A 315-amino-acid chain; its full sequence is MSPDLNCISSSLLRSEPCINSLIAILTVCGQQLFSSYTFSCPCQVGKNFYYGSAFLVVPALILLIAGYALRGQMWTVASEYCCCSCTPPYRRSSPLERRLACLMFFDITGRALVAPLTWLTVTLLTGTYYECAASEFASVDQYPMFANVTPSKREEMLAGFPCYTSAPSDVIPIRDEVALLHRYQSQMLGWILVVLATIALLLSKCLARCCSPLTSLQHHYWTNHLHNERVLFEKAAEEHSQLLIRHRIKKVFGFVPGSEDIKHIRIPSCQDWREISVPNLLCVGDTSQGPYSFLGDRVVEENEEDRQEGIEMKP.

The Cytoplasmic segment spans residues 1 to 14 (MSPDLNCISSSLLR). A helical transmembrane segment spans residues 15-37 (SEPCINSLIAILTVCGQQLFSSY). The Extracellular portion of the chain corresponds to 38 to 48 (TFSCPCQVGKN). Intrachain disulfides connect Cys41–Cys132 and Cys43–Cys163. Residues 49 to 71 (FYYGSAFLVVPALILLIAGYALR) form a helical membrane-spanning segment. Over 72-104 (GQMWTVASEYCCCSCTPPYRRSSPLERRLACLM) the chain is Cytoplasmic. A helical transmembrane segment spans residues 105–130 (FFDITGRALVAPLTWLTVTLLTGTYY). At 131 to 184 (ECAASEFASVDQYPMFANVTPSKREEMLAGFPCYTSAPSDVIPIRDEVALLHRY) the chain is on the extracellular side. The helical transmembrane segment at 185 to 208 (QSQMLGWILVVLATIALLLSKCLA) threads the bilayer. At 209-315 (RCCSPLTSLQ…DRQEGIEMKP (107 aa)) the chain is on the cytoplasmic side.

The protein belongs to the CALHM family. Oligomerizes to form decameric and undecameric channels. Two hemichannels can assemble in a tail-to-tail manner to form a gap junction.

It localises to the cell membrane. May assemble to form gap junction channel-like structures involved in intercellular communication. Channel gating and ion conductance are likely regulated by membrane lipids rather than by membrane depolarization or extracellular calcium levels. This chain is Calcium homeostasis modulator protein 4, found in Mus musculus (Mouse).